A 224-amino-acid polypeptide reads, in one-letter code: Large ribosomal subunit protein uL1 (224 aa).

Belongs to the universal ribosomal protein uL1 family. Part of the 50S ribosomal subunit.

Its function is as follows. Binds directly to 23S rRNA. The L1 stalk is quite mobile in the ribosome, and is involved in E site tRNA release. In terms of biological role, protein L1 is also a translational repressor protein, it controls the translation of the L11 operon by binding to its mRNA. This chain is Large ribosomal subunit protein uL1, found in Borrelia hermsii (strain HS1 / DAH).